Here is a 78-residue protein sequence, read N- to C-terminus: Translational regulator CsrA (78 aa).

This sequence belongs to the CsrA/RsmA family. Homodimer; the beta-strands of each monomer intercalate to form a hydrophobic core, while the alpha-helices form wings that extend away from the core.

The protein resides in the cytoplasm. In terms of biological role, a translational regulator that binds mRNA to regulate translation initiation and/or mRNA stability. Usually binds in the 5'-UTR at or near the Shine-Dalgarno sequence preventing ribosome-binding, thus repressing translation. Its main target seems to be the major flagellin gene, while its function is anatagonized by FliW. In Natranaerobius thermophilus (strain ATCC BAA-1301 / DSM 18059 / JW/NM-WN-LF), this protein is Translational regulator CsrA.